Here is a 312-residue protein sequence, read N- to C-terminus: Malate dehydrogenase (312 aa).

NAD(+)-binding positions include 7 to 13 (GAAGGIG) and Asp-34. Positions 81 and 87 each coordinate substrate. NAD(+) contacts are provided by residues Asn-94 and 117-119 (ITN). The substrate site is built by Asn-119 and Arg-153. The active-site Proton acceptor is His-177. An NAD(+)-binding site is contributed by Met-227.

Belongs to the LDH/MDH superfamily. MDH type 1 family. As to quaternary structure, homodimer.

The enzyme catalyses (S)-malate + NAD(+) = oxaloacetate + NADH + H(+). Catalyzes the reversible oxidation of malate to oxaloacetate. This Moritella marina (Vibrio marinus) protein is Malate dehydrogenase.